A 379-amino-acid chain; its full sequence is Elongation factor Ts, mitochondrial (379 aa).

The transit peptide at 1-45 (MALYRTARRPLQMMLFSRLGNPEQNYSSWARKDASQSAFGMFVRL) directs the protein to the mitochondrion.

Belongs to the EF-Ts family.

The protein resides in the mitochondrion. In terms of biological role, associates with the EF-Tu.GDP complex and induces the exchange of GDP to GTP. It remains bound to the aminoacyl-tRNA.EF-Tu.GTP complex up to the GTP hydrolysis stage on the ribosome. The protein is Elongation factor Ts, mitochondrial of Ricinus communis (Castor bean).